Consider the following 72-residue polypeptide: MKLTCVLIVAVLFLTACQLTTAASYARSERQHPDLGSSDQNSKLTKRCLGSGETCWLDSSCCSFSCTNNVCF.

The N-terminal stretch at 1–22 is a signal peptide; the sequence is MKLTCVLIVAVLFLTACQLTTA. Positions 23–45 are excised as a propeptide; that stretch reads ASYARSERQHPDLGSSDQNSKLT. Positions 26–45 are disordered; sequence ARSERQHPDLGSSDQNSKLT. Disulfide bonds link cysteine 48-cysteine 62, cysteine 55-cysteine 66, and cysteine 61-cysteine 71.

Belongs to the conotoxin O1 superfamily. As to expression, expressed by the venom duct.

The protein resides in the secreted. In Conus ventricosus (Mediterranean cone), this protein is Conotoxin VnMKLT2-0221.